The sequence spans 62 residues: DNA-directed RNA polymerase subunit Rpo10 (62 aa).

Positions 6, 9, 43, and 44 each coordinate Zn(2+).

This sequence belongs to the archaeal Rpo10/eukaryotic RPB10 RNA polymerase subunit family. Part of the RNA polymerase complex. Zn(2+) is required as a cofactor.

The protein localises to the cytoplasm. It catalyses the reaction RNA(n) + a ribonucleoside 5'-triphosphate = RNA(n+1) + diphosphate. Its function is as follows. DNA-dependent RNA polymerase (RNAP) catalyzes the transcription of DNA into RNA using the four ribonucleoside triphosphates as substrates. The polypeptide is DNA-directed RNA polymerase subunit Rpo10 (Methanosarcina acetivorans (strain ATCC 35395 / DSM 2834 / JCM 12185 / C2A)).